Consider the following 413-residue polypeptide: MKSEELFSQAKELMPGGVSSPVRAIKPYPFYTAHAQGAHITTVDGEDLIDCCMAYGPLLLGHAHPEIKKAIAAQLEKGWLYGTPTPYEPEFARLITGDHPGMEMARFVSSGSEATMAAIRLARGFTGKSDIIKIEGGFHGAHDAVLVKAGSGATTMGVPDSAGVLPALVAHTRQLPYNDAEALEAMLASHHDIAALIIEPVLGNIGPVLPEDHYLREIREITSAYGVLLIFDEVITGYRLGIGGAQRMFGVKPDLTTLGKIIGGGLPIGAFCGRKEIMSLVAPQGPVYQAGTFSGNPLSLAAGIATIRWLHDHPGIYPDLAEKARAIGDSIGGGAGGSFVRIGSMFKYFFRDSAPKNYTEVKECDTAAFGRFWEKMRARGIFLPPSQFETNFLSAAHTSDDLATLAGGYTACL.

Lys260 bears the N6-(pyridoxal phosphate)lysine mark.

The protein belongs to the class-III pyridoxal-phosphate-dependent aminotransferase family. HemL subfamily. The cofactor is pyridoxal 5'-phosphate.

It is found in the cytoplasm. It catalyses the reaction (S)-4-amino-5-oxopentanoate = 5-aminolevulinate. The protein operates within porphyrin-containing compound metabolism; protoporphyrin-IX biosynthesis; 5-aminolevulinate from L-glutamyl-tRNA(Glu): step 2/2. This is Glutamate-1-semialdehyde 2,1-aminomutase from Methanoregula boonei (strain DSM 21154 / JCM 14090 / 6A8).